Reading from the N-terminus, the 420-residue chain is Phosphoglycerate kinase, cytosolic (420 aa).

Residues Val23, Asp24, Phe25, Asn26, Arg39, Ser61, His62, Gly64, Arg65, Arg135, His171, and Arg172 each coordinate (2R)-3-phosphoglycerate. Gly217 lines the ADP pocket. Gly217 serves as a coordination point for CDP. Position 219 (Lys219) interacts with (2R)-3-phosphoglycerate. Residue Lys219 participates in AMP binding. Asp222 is a binding site for CDP. Asp222 lines the Mg(2+) pocket. Residues Lys223 and Gly241 each contribute to the ADP site. An AMP-binding site is contributed by Lys223. Lys223 contributes to the ATP binding site. Position 241 (Gly241) interacts with CDP. The AMP site is built by Ala242 and Ala314. Positions 242 and 314 each coordinate ATP. Residues Ala314 and Asn338 each contribute to the ADP site. CDP-binding residues include Gly339 and Phe344. The ADP site is built by Phe344, Glu345, Asp377, and Ser378. Glu345 contributes to the AMP binding site. The ATP site is built by Glu345, Asp377, and Ser378. Position 377 (Asp377) interacts with Mg(2+).

Belongs to the phosphoglycerate kinase family. In terms of assembly, monomer. Requires Mg(2+) as cofactor.

It is found in the cytoplasm. The catalysed reaction is (2R)-3-phosphoglycerate + ATP = (2R)-3-phospho-glyceroyl phosphate + ADP. It functions in the pathway carbohydrate degradation; glycolysis; pyruvate from D-glyceraldehyde 3-phosphate: step 2/5. The protein is Phosphoglycerate kinase, cytosolic (C1PGK) of Trypanosoma congolense.